The sequence spans 131 residues: Large ribosomal subunit protein bL12 (131 aa).

The protein belongs to the bacterial ribosomal protein bL12 family. As to quaternary structure, homodimer. Part of the ribosomal stalk of the 50S ribosomal subunit. Forms a multimeric L10(L12)X complex, where L10 forms an elongated spine to which 2 to 4 L12 dimers bind in a sequential fashion. Binds GTP-bound translation factors.

In terms of biological role, forms part of the ribosomal stalk which helps the ribosome interact with GTP-bound translation factors. Is thus essential for accurate translation. This chain is Large ribosomal subunit protein bL12, found in Prochlorococcus marinus (strain NATL1A).